The following is a 1222-amino-acid chain: ATP-dependent helicase/nuclease subunit A (1222 aa).

The 457-residue stretch at 39–495 (QKRTAQQIEA…ILLKENFRSQ (457 aa)) folds into the UvrD-like helicase ATP-binding domain. Residue 60-67 (ASAGSGKT) coordinates ATP. A UvrD-like helicase C-terminal domain is found at 524 to 810 (QLIAGSHAQT…NLMTIHKSKG (287 aa)).

The protein belongs to the helicase family. AddA subfamily. In terms of assembly, heterodimer of AddA and AddB/RexB. The cofactor is Mg(2+).

The catalysed reaction is Couples ATP hydrolysis with the unwinding of duplex DNA by translocating in the 3'-5' direction.. It catalyses the reaction ATP + H2O = ADP + phosphate + H(+). In terms of biological role, the heterodimer acts as both an ATP-dependent DNA helicase and an ATP-dependent, dual-direction single-stranded exonuclease. Recognizes the chi site generating a DNA molecule suitable for the initiation of homologous recombination. The AddA nuclease domain is required for chi fragment generation; this subunit has the helicase and 3' -&gt; 5' nuclease activities. The protein is ATP-dependent helicase/nuclease subunit A of Streptococcus pyogenes serotype M49 (strain NZ131).